We begin with the raw amino-acid sequence, 198 residues long: Transcription factor FapR (198 aa).

Residues 102–167 (TRIARGHHLF…HGRTIVEVNS (66 aa)) enclose the MaoC-like domain.

It belongs to the FapR family.

Transcriptional factor involved in regulation of membrane lipid biosynthesis by repressing genes involved in fatty acid and phospholipid metabolism. This Geobacillus kaustophilus (strain HTA426) protein is Transcription factor FapR.